We begin with the raw amino-acid sequence, 462 residues long: Nuclear factor interleukin-3-regulated protein (462 aa).

K24 is covalently cross-linked (Glycyl lysine isopeptide (Lys-Gly) (interchain with G-Cter in SUMO2)). The bZIP domain occupies 73 to 136 (DAMYWEKRRK…GLISSTAYAQ (64 aa)). Residues 79–95 (KRRKNNEAAKRSREKRR) are basic motif. The tract at residues 99–106 (LVLENKLI) is leucine-zipper. 2 disordered regions span residues 189–237 (DVSE…DDRG) and 258–302 (SPPL…IHSP). Positions 201–210 (ESSVQGSCRS) are enriched in polar residues. K214 participates in a covalent cross-link: Glycyl lysine isopeptide (Lys-Gly) (interchain with G-Cter in SUMO2). A Glycyl lysine isopeptide (Lys-Gly) (interchain with G-Cter in SUMO1); alternate cross-link involves residue K219. K219 is covalently cross-linked (Glycyl lysine isopeptide (Lys-Gly) (interchain with G-Cter in SUMO2); alternate). Residues 227–237 (SYTREPRDDRG) are compositionally biased toward basic and acidic residues. Polar residues predominate over residues 264-274 (VNRSSSNSPRT). The tract at residues 299 to 363 (IHSPVELKHV…PIDMTSKRHF (65 aa)) is necessary for transcriptional repression and sufficient for interaction with DR1. At S301 the chain carries Phosphoserine. Residues K306, K314, K326, K332, K337, and K350 each participate in a glycyl lysine isopeptide (Lys-Gly) (interchain with G-Cter in SUMO2) cross-link. S353 carries the post-translational modification Phosphoserine. Glycyl lysine isopeptide (Lys-Gly) (interchain with G-Cter in SUMO2) cross-links involve residues K360, K394, K401, K406, K412, K419, K424, K434, and K448.

It belongs to the bZIP family. NFIL3 subfamily. In terms of assembly, homodimer. Binds DNA as a dimer. Interacts with DR1. Interacts with PER2 and CRY2. Interacts with NR0B2. Interacts with MYSM1. In terms of tissue distribution, expressed in bladder stomach, thyroid, spinal cord, lymph node, trachea, adrenal gland, bone marrow and muscle.

It localises to the nucleus. Acts as a transcriptional regulator that recognizes and binds to the sequence 5'-[GA]TTA[CT]GTAA[CT]-3', a sequence present in many cellular and viral promoters. Represses transcription from promoters with activating transcription factor (ATF) sites. Represses promoter activity in osteoblasts. Represses transcriptional activity of PER1. Represses transcriptional activity of PER2 via the B-site on the promoter. Activates transcription from the interleukin-3 promoter in T-cells. Competes for the same consensus-binding site with PAR DNA-binding factors (DBP, HLF and TEF). Component of the circadian clock that acts as a negative regulator for the circadian expression of PER2 oscillation in the cell-autonomous core clock. Protects pro-B cells from programmed cell death. Represses the transcription of CYP2A5. Positively regulates the expression and activity of CES2 by antagonizing the repressive action of NR1D1 on CES2. Required for the development of natural killer cell precursors. This is Nuclear factor interleukin-3-regulated protein (NFIL3) from Homo sapiens (Human).